A 190-amino-acid chain; its full sequence is Threonylcarbamoyl-AMP synthase (190 aa).

Positions 7–190 (IGSIAAAVDL…ALTGELFRQG (184 aa)) constitute a YrdC-like domain.

It belongs to the SUA5 family. TsaC subfamily.

The protein resides in the cytoplasm. The catalysed reaction is L-threonine + hydrogencarbonate + ATP = L-threonylcarbamoyladenylate + diphosphate + H2O. Functionally, required for the formation of a threonylcarbamoyl group on adenosine at position 37 (t(6)A37) in tRNAs that read codons beginning with adenine. Catalyzes the conversion of L-threonine, HCO(3)(-)/CO(2) and ATP to give threonylcarbamoyl-AMP (TC-AMP) as the acyladenylate intermediate, with the release of diphosphate. This is Threonylcarbamoyl-AMP synthase from Salmonella typhimurium (strain LT2 / SGSC1412 / ATCC 700720).